We begin with the raw amino-acid sequence, 840 residues long: Axin-2 (840 aa).

Residues 1-75 (MSSAVLVTLL…EGRASPDSPL (75 aa)) are disordered. Positions 21–30 (APRPPVPGEE) match the Tankyrase-binding motif motif. Polar residues predominate over residues 42 to 55 (KVQSTKPMPVSSNA). The segment covering 56–69 (RRNEDGLGEPEGRA) has biased composition (basic and acidic residues). Residues 81–200 (SLHSLLGDQD…LTSDIYLEYV (120 aa)) form the RGS domain. Disordered regions lie at residues 300–363 (SELS…KEMT), 398–435 (IRED…EEDP), 447–485 (LKTP…LLPT), 572–614 (RGGT…GDRS), and 715–745 (ASQQ…EDHK). The segment covering 303-318 (SSDALTDDSMSMTDSS) has biased composition (low complexity). The segment at 327 to 413 (MGSKKQLQRE…KEGSEQALSS (87 aa)) is interaction with GSK3B. Residues 413-478 (SRDGAPVQHP…HHHQHHHHQQ (66 aa)) are interaction with beta-catenin. Over residues 468–478 (DHHHQHHHHQQ) the composition is skewed to basic residues. In terms of domain architecture, DIX spans 758 to 840 (ASELVVTYFF…RILGKVERID (83 aa)).

As to quaternary structure, interacts with glycogen synthase kinase-3 beta (GSK3B) and beta-catenin. The interaction between axin and beta-catenin occurs via the armadillo repeats contained in beta-catenin. Interacts with SMAD7 and RNF111. Interacts with ANKRD6. Interacts with SIAH1. Interacts with SIAH2. Post-translationally, ADP-ribosylated by tankyrase TNKS and TNKS2. Poly-ADP-ribosylated protein is recognized by RNF146, followed by ubiquitination and subsequent activation of the Wnt signaling pathway. In terms of processing, ubiquitinated by RNF146 when poly-ADP-ribosylated, leading to its degradation and subsequent activation of the Wnt signaling pathway. Deubiquitinated by USP34, deubiquitinated downstream of beta-catenin stabilization step: deubiquitination is important Wnt signaling to positively regulate beta-catenin (CTNBB1)-mediated transcription. Probably phosphorylated by GSK3B and dephosphorylated by PP2A. In terms of tissue distribution, expressed in Tcf7-positive innate-like T-cells (at protein level).

It localises to the cytoplasm. Its function is as follows. Inhibitor of the Wnt signaling pathway. Down-regulates beta-catenin. Probably facilitate the phosphorylation of beta-catenin and APC by GSK3B. The chain is Axin-2 from Mus musculus (Mouse).